Here is an 813-residue protein sequence, read N- to C-terminus: Immunoglobulin superfamily DCC subclass member 3 (813 aa).

The interval 1–21 is disordered; it reads MAEPRTASPRRLPALRRPGFL. The signal sequence occupies residues 1-47; sequence MAEPRTASPRRLPALRRPGFLPPLLPPPPPPLLLLLLLLPLPAPSLG. Over residues 9-19 the composition is skewed to low complexity; sequence PRRLPALRRPG. Ig-like C2-type domains are found at residues 49 to 151, 151 to 232, 250 to 333, and 341 to 428; these read GHSA…ATMS, SDFH…VRVS, PTIL…RTAQ, and PAEF…ARLT. Intrachain disulfides connect cysteine 75/cysteine 129 and cysteine 172/cysteine 221. Asparagine 105 carries an N-linked (GlcNAc...) asparagine glycan. An N-linked (GlcNAc...) asparagine glycan is attached at asparagine 258. 2 disulfide bridges follow: cysteine 271–cysteine 319 and cysteine 363–cysteine 412. N-linked (GlcNAc...) asparagine glycans are attached at residues asparagine 393 and asparagine 394. Fibronectin type-III domains follow at residues 438-532 and 535-630; these read PPRN…TLGE and VPPP…ASER. Asparagine 592, asparagine 616, and asparagine 646 each carry an N-linked (GlcNAc...) asparagine glycan. Residues 653-673 form a helical membrane-spanning segment; it reads IVIGIHIGVTCIIFCVLFLLF. 2 disordered regions span residues 689–724 and 775–813; these read LSPP…EKPV and TTEA…AAPQ.

This sequence belongs to the immunoglobulin superfamily. DCC family. In terms of tissue distribution, detected in cerebellum, kidney, heart, lung, skeletal muscle and spleen.

The protein localises to the membrane. In Mus musculus (Mouse), this protein is Immunoglobulin superfamily DCC subclass member 3 (Igdcc3).